The primary structure comprises 435 residues: 5-methylthioadenosine/S-adenosylhomocysteine deaminase (435 aa).

The Zn(2+) site is built by His65 and His67. Positions 94, 150, and 189 each coordinate substrate. His216 serves as a coordination point for Zn(2+). Residues Glu219 and Asp304 each coordinate substrate. Asp304 is a Zn(2+) binding site.

The protein belongs to the metallo-dependent hydrolases superfamily. MTA/SAH deaminase family. The cofactor is Zn(2+).

It catalyses the reaction S-adenosyl-L-homocysteine + H2O + H(+) = S-inosyl-L-homocysteine + NH4(+). The catalysed reaction is S-methyl-5'-thioadenosine + H2O + H(+) = S-methyl-5'-thioinosine + NH4(+). In terms of biological role, catalyzes the deamination of 5-methylthioadenosine and S-adenosyl-L-homocysteine into 5-methylthioinosine and S-inosyl-L-homocysteine, respectively. Is also able to deaminate adenosine. This chain is 5-methylthioadenosine/S-adenosylhomocysteine deaminase, found in Bacillus cereus (strain ATCC 14579 / DSM 31 / CCUG 7414 / JCM 2152 / NBRC 15305 / NCIMB 9373 / NCTC 2599 / NRRL B-3711).